A 60-amino-acid chain; its full sequence is Ras-related protein Rab-2A (60 aa).

GTP contacts are provided by serine 1, cysteine 2, and threonine 19. Serine 1 contacts Mg(2+). An Effector region motif is present at residues 16 to 24 (HDLTIGVEF). Position 19 (threonine 19) interacts with Mg(2+).

This sequence belongs to the small GTPase superfamily. Rab family. In terms of assembly, interacts with PRKCI. Interacts with TRIP11. Interacts (in GTP-bound form) with GARIN1B. Interacts (GTP-bound) with HOPS complex component VPS39; interaction contributes to obtaining a functional HOPS complex that promotes autophagosome-lysosome membrane fusion driven by STX17-SNAP29-VAMP8. May interact with VPS41. It depends on Mg(2+) as a cofactor. In terms of processing, prenylated. Prenylation is required for association with cellular membranes.

Its subcellular location is the endoplasmic reticulum-Golgi intermediate compartment membrane. The protein resides in the melanosome. It is found in the endoplasmic reticulum membrane. It localises to the golgi apparatus membrane. The protein localises to the cytoplasmic vesicle. Its subcellular location is the secretory vesicle. The protein resides in the acrosome. It is found in the autophagosome membrane. It carries out the reaction GTP + H2O = GDP + phosphate + H(+). Its activity is regulated as follows. Regulated by guanine nucleotide exchange factors (GEFs) which promote the exchange of bound GDP for free GTP, GTPase activating proteins (GAPs) which increase the GTP hydrolysis activity, and GDP dissociation inhibitors (GDIs) which inhibit the dissociation of the nucleotide from the GTPase. Functionally, the small GTPases Rab are key regulators of intracellular membrane trafficking, from the formation of transport vesicles to their fusion with membranes. Rabs cycle between active GTP-bound and inactive GDP-bound states. In their active state, drive transport of vesicular carriers from donor organelles to acceptor organelles to regulate the membrane traffic that maintains organelle identity and morphology. RAB2A regulates autophagy by promoting autophagosome-lysosome fusion via recruitment of the HOPS endosomal tethering complex; this process involves autophagosomal RAB2A and lysosomal RAB39A recruitment of HOPS subcomplexes VPS39-VPS11 and VPS41-VPS16-VPS18-VPS33A, respectively, which assemble into a functional complex to mediate membrane tethering and SNAREs-driven membrane fusion. Required for protein transport from the endoplasmic reticulum to the Golgi complex. Regulates the compacted morphology of the Golgi. Together with RAB2B, redundantly required for efficient autophagic flux. The polypeptide is Ras-related protein Rab-2A (Mesocricetus auratus (Golden hamster)).